A 167-amino-acid polypeptide reads, in one-letter code: Endoribonuclease YbeY (167 aa).

Residues histidine 132, histidine 136, and histidine 142 each contribute to the Zn(2+) site.

It belongs to the endoribonuclease YbeY family. It depends on Zn(2+) as a cofactor.

It localises to the cytoplasm. In terms of biological role, single strand-specific metallo-endoribonuclease involved in late-stage 70S ribosome quality control and in maturation of the 3' terminus of the 16S rRNA. This is Endoribonuclease YbeY from Clostridium tetani (strain Massachusetts / E88).